The following is a 582-amino-acid chain: Proline--tRNA ligase (582 aa).

It belongs to the class-II aminoacyl-tRNA synthetase family. ProS type 1 subfamily. As to quaternary structure, homodimer.

Its subcellular location is the cytoplasm. The catalysed reaction is tRNA(Pro) + L-proline + ATP = L-prolyl-tRNA(Pro) + AMP + diphosphate. Catalyzes the attachment of proline to tRNA(Pro) in a two-step reaction: proline is first activated by ATP to form Pro-AMP and then transferred to the acceptor end of tRNA(Pro). As ProRS can inadvertently accommodate and process non-cognate amino acids such as alanine and cysteine, to avoid such errors it has two additional distinct editing activities against alanine. One activity is designated as 'pretransfer' editing and involves the tRNA(Pro)-independent hydrolysis of activated Ala-AMP. The other activity is designated 'posttransfer' editing and involves deacylation of mischarged Ala-tRNA(Pro). The misacylated Cys-tRNA(Pro) is not edited by ProRS. The sequence is that of Proline--tRNA ligase from Mycobacterium bovis (strain ATCC BAA-935 / AF2122/97).